Reading from the N-terminus, the 132-residue chain is Small ribosomal subunit protein uS8c (132 aa).

It belongs to the universal ribosomal protein uS8 family. In terms of assembly, part of the 30S ribosomal subunit.

The protein resides in the plastid. It is found in the chloroplast. Its function is as follows. One of the primary rRNA binding proteins, it binds directly to 16S rRNA central domain where it helps coordinate assembly of the platform of the 30S subunit. The polypeptide is Small ribosomal subunit protein uS8c (rps8) (Drimys granadensis).